A 460-amino-acid polypeptide reads, in one-letter code: Putative protein p41 (460 aa).

One can recognise a Helicase ATP-binding domain in the interval 14–186; that stretch reads INHLLDIKRS…WGQAWFVDQG (173 aa).

The chain is Putative protein p41 (41) from Escherichia coli (Bacteriophage APSE-1).